The primary structure comprises 440 residues: Tryptophan aminotransferase-related protein 2 (440 aa).

The helical transmembrane segment at 7 to 26 threads the bilayer; it reads FLSWRNMLVLSLAINFSLIL. Pyridoxal 5'-phosphate-binding positions include Tyr-112, 154-155, Asn-222, 242-245, 265-268, and Arg-276; these read ST, DLAY, and TASK. At Lys-268 the chain carries N6-(pyridoxal phosphate)lysine.

The protein belongs to the alliinase family. Requires pyridoxal 5'-phosphate as cofactor. In terms of tissue distribution, expressed in roots, cotyledons and in the apical parts of hypocotyls. In roots, restricted to the provasculature of meristematic regions. Detected on the inner side of the apical hooks.

It localises to the membrane. The enzyme catalyses L-tryptophan + 2-oxoglutarate = indole-3-pyruvate + L-glutamate. The catalysed reaction is L-tryptophan + pyruvate = indole-3-pyruvate + L-alanine. The protein operates within plant hormone metabolism; auxin biosynthesis. Inhibited by L-kynurenine. In terms of biological role, involved in auxin production. Both TAA1 and TAR2 are required for maintaining proper auxin levels in roots, while TAA1, TAR1 and TAR2 are required for proper embryo patterning. Involved in the maintenance of the root stem cell niches. The polypeptide is Tryptophan aminotransferase-related protein 2 (TAR2) (Arabidopsis thaliana (Mouse-ear cress)).